Here is a 152-residue protein sequence, read N- to C-terminus: Small ribosomal subunit protein uS19x (152 aa).

This sequence belongs to the universal ribosomal protein uS19 family.

It is found in the cytoplasm. This is Small ribosomal subunit protein uS19x (RPS15D) from Arabidopsis thaliana (Mouse-ear cress).